A 224-amino-acid polypeptide reads, in one-letter code: Deoxyguanosine kinase (224 aa).

Residue 8–16 (GPIGAGKSS) coordinates ATP. Substrate-binding residues include glutamate 32, tyrosine 44, and glutamine 55. The Proton acceptor role is filled by aspartate 78. Residues arginine 79, aspartate 84, and glutamate 149 each contribute to the substrate site.

Belongs to the DCK/DGK family. In terms of assembly, heterodimer of a deoxyadenosine (DAK) and a deoxyguanosine kinase (DGK).

It catalyses the reaction 2'-deoxyguanosine + ATP = dGMP + ADP + H(+). Functionally, DGK/DAK plays an essential role in generating the deoxyribonucleotide precursors, dGTP and dATP, for DNA metabolism. This Lactobacillus johnsonii (strain CNCM I-12250 / La1 / NCC 533) protein is Deoxyguanosine kinase.